The sequence spans 322 residues: Homoserine kinase (322 aa).

106–116 serves as a coordination point for ATP; it reads ALSSGMGGSAA.

This sequence belongs to the GHMP kinase family. Homoserine kinase subfamily.

The protein resides in the cytoplasm. It carries out the reaction L-homoserine + ATP = O-phospho-L-homoserine + ADP + H(+). It participates in amino-acid biosynthesis; L-threonine biosynthesis; L-threonine from L-aspartate: step 4/5. In terms of biological role, catalyzes the ATP-dependent phosphorylation of L-homoserine to L-homoserine phosphate. The protein is Homoserine kinase of Xanthomonas campestris pv. campestris (strain B100).